A 343-amino-acid chain; its full sequence is MNFCRILLKPLKKNEALSGYSAEGLHYLTDNKHFNPELPFSRQEFITVKPQKQQGMSISGFQPKLQLIIKDEHFDSVNQQGNYILKPSPEEYPFLAENEHATMRIMKELGFDVPENGLVSFAGEQNHKEFAFVITRFDRDKQQKPMHQEQLDGAMNIRDKYGKIGADNEQYVSYEQIAKFILQHTENHLAQQREIFRRIIYAYLLGNNDLHLRNFSFIYPKNSHPKLAPIYDFVSVSPYPEIFNSTLLALPLLAREEGNATLAKGFNTQYGEYIGDDFVEFGENIGLNKNVIIQKLIPEIIQEKEKVEQIYSQSFMPQPHIDCVLKTYRKRLALLNLLNEPEL.

The active-site Proton acceptor is Asp209.

It belongs to the HipA Ser/Thr kinase family.

This is Putative kinase HI_0665 from Haemophilus influenzae (strain ATCC 51907 / DSM 11121 / KW20 / Rd).